The chain runs to 506 residues: H/ACA ribonucleoprotein complex subunit DKC1 (506 aa).

The tract at residues 1-26 is disordered; sequence MADTESKKEKKRKSKKISDEEVGDIQ. D120 (nucleophile) is an active-site residue. Residues 291–366 enclose the PUA domain; it reads HKRIVMKDSA…VVAKIKRVIM (76 aa). Disordered stretches follow at residues 391–410 and 419–506; these read GLLDKHGKPNNSTPSDWKEG and VKKG…ADSD. A compositionally biased stretch (basic and acidic residues) spans 421–434; the sequence is KGGEASAKRKRDES. Over residues 457 to 466 the composition is skewed to basic residues; the sequence is EKKKKKKEKK.

It belongs to the pseudouridine synthase TruB family. In terms of assembly, part of the H/ACA small nucleolar ribonucleoprotein (H/ACA snoRNP) complex. The complex binds a box H/ACA small nucleolar RNA (snoRNA), which may target the specific site of modification within the RNA substrate.

Its subcellular location is the nucleus. The protein resides in the nucleolus. It localises to the cajal body. It carries out the reaction uridine in 5S rRNA = pseudouridine in 5S rRNA. In terms of biological role, catalytic subunit of H/ACA small nucleolar ribonucleoprotein (H/ACA snoRNP) complex, which catalyzes pseudouridylation of rRNA. This involves the isomerization of uridine such that the ribose is subsequently attached to C5, instead of the normal N1. Pseudouridine ('psi') residues may serve to stabilize the conformation of rRNAs. Required for ribosome biogenesis and telomere maintenance. The polypeptide is H/ACA ribonucleoprotein complex subunit DKC1 (Danio rerio (Zebrafish)).